We begin with the raw amino-acid sequence, 291 residues long: ATP synthase subunit a (291 aa).

7 helical membrane passes run 50–70 (LDSM…FWIV), 108–128 (IAPL…MDLI), 129–149 (PVDW…GMDP), 161–181 (DPNI…FYSI), 203–223 (PVAK…TFLA), 241–261 (LIFI…SVPW), and 262–282 (AIFH…LTIV).

It belongs to the ATPase A chain family. F-type ATPases have 2 components, CF(1) - the catalytic core - and CF(0) - the membrane proton channel. CF(1) has five subunits: alpha(3), beta(3), gamma(1), delta(1), epsilon(1). CF(0) has three main subunits: a(1), b(2) and c(9-12). The alpha and beta chains form an alternating ring which encloses part of the gamma chain. CF(1) is attached to CF(0) by a central stalk formed by the gamma and epsilon chains, while a peripheral stalk is formed by the delta and b chains.

The protein resides in the cell inner membrane. Its function is as follows. Key component of the proton channel; it plays a direct role in the translocation of protons across the membrane. The sequence is that of ATP synthase subunit a from Acinetobacter baumannii (strain AB307-0294).